Reading from the N-terminus, the 378-residue chain is 3-hydroxyisobutyryl-CoA hydrolase 1 (378 aa).

The residue at position 2 (A2) is an N-acetylalanine. Positions 94, 119, 142, and 150 each coordinate substrate.

The protein belongs to the enoyl-CoA hydratase/isomerase family. Expressed in roots, leaves, flowers and siliques.

The protein localises to the peroxisome. It catalyses the reaction 3-hydroxy-2-methylpropanoyl-CoA + H2O = 3-hydroxy-2-methylpropanoate + CoA + H(+). It participates in amino-acid degradation; L-valine degradation. With respect to regulation, inhibited by copper. In terms of biological role, involved in valine catabolism. May be indirectly involved in benzoic acid biosynthesis and in cold signaling and cold tolerance. This Arabidopsis thaliana (Mouse-ear cress) protein is 3-hydroxyisobutyryl-CoA hydrolase 1 (CHY1).